Here is a 461-residue protein sequence, read N- to C-terminus: Adenine DNA glycosylase (461 aa).

E69 acts as the Proton donor/acceptor in catalysis. Residues C226, C233, C236, and C242 each coordinate [4Fe-4S] cluster. Residues 296 to 437 (QREERALVVI…RAALEIKKRK (142 aa)) form the Nudix hydrolase domain. The Nudix box signature appears at 340-366 (FGQESWPKDMDAEFQKSIAQWISNDSR).

The protein belongs to the Nth/MutY family. In terms of assembly, monomer. Requires [4Fe-4S] cluster as cofactor.

The catalysed reaction is Hydrolyzes free adenine bases from 7,8-dihydro-8-oxoguanine:adenine mismatched double-stranded DNA, leaving an apurinic site.. Adenine glycosylase active on G-A mispairs. Has glycosylase and nicking activities and is active at A/G and A/GO sites. This Schizosaccharomyces pombe (strain 972 / ATCC 24843) (Fission yeast) protein is Adenine DNA glycosylase (myh1).